A 280-amino-acid polypeptide reads, in one-letter code: Tryptophan synthase alpha chain (280 aa).

Residues glutamate 50 and aspartate 61 each act as proton acceptor in the active site.

The protein belongs to the TrpA family. Tetramer of two alpha and two beta chains.

It carries out the reaction (1S,2R)-1-C-(indol-3-yl)glycerol 3-phosphate + L-serine = D-glyceraldehyde 3-phosphate + L-tryptophan + H2O. It functions in the pathway amino-acid biosynthesis; L-tryptophan biosynthesis; L-tryptophan from chorismate: step 5/5. The alpha subunit is responsible for the aldol cleavage of indoleglycerol phosphate to indole and glyceraldehyde 3-phosphate. This chain is Tryptophan synthase alpha chain, found in Methylorubrum extorquens (strain PA1) (Methylobacterium extorquens).